Consider the following 188-residue polypeptide: Protein GrpE (188 aa).

The span at 1–22 (MEENKQNQNLNTEETTEQQTEA) shows a compositional bias: low complexity. The tract at residues 1 to 26 (MEENKQNQNLNTEETTEQQTEAETVE) is disordered.

This sequence belongs to the GrpE family. In terms of assembly, homodimer.

Its subcellular location is the cytoplasm. In terms of biological role, participates actively in the response to hyperosmotic and heat shock by preventing the aggregation of stress-denatured proteins, in association with DnaK and GrpE. It is the nucleotide exchange factor for DnaK and may function as a thermosensor. Unfolded proteins bind initially to DnaJ; upon interaction with the DnaJ-bound protein, DnaK hydrolyzes its bound ATP, resulting in the formation of a stable complex. GrpE releases ADP from DnaK; ATP binding to DnaK triggers the release of the substrate protein, thus completing the reaction cycle. Several rounds of ATP-dependent interactions between DnaJ, DnaK and GrpE are required for fully efficient folding. The protein is Protein GrpE of Exiguobacterium sibiricum (strain DSM 17290 / CCUG 55495 / CIP 109462 / JCM 13490 / 255-15).